A 518-amino-acid chain; its full sequence is Glutamate--cysteine ligase (518 aa).

It belongs to the glutamate--cysteine ligase type 1 family. Type 1 subfamily.

The enzyme catalyses L-cysteine + L-glutamate + ATP = gamma-L-glutamyl-L-cysteine + ADP + phosphate + H(+). It participates in sulfur metabolism; glutathione biosynthesis; glutathione from L-cysteine and L-glutamate: step 1/2. The polypeptide is Glutamate--cysteine ligase (Escherichia coli O7:K1 (strain IAI39 / ExPEC)).